A 231-amino-acid polypeptide reads, in one-letter code: Sugar fermentation stimulation protein homolog (231 aa).

This sequence belongs to the SfsA family.

The sequence is that of Sugar fermentation stimulation protein homolog from Citrifermentans bemidjiense (strain ATCC BAA-1014 / DSM 16622 / JCM 12645 / Bem) (Geobacter bemidjiensis).